Here is a 21-residue protein sequence, read N- to C-terminus: Large ribosomal subunit protein uL10 (21 aa).

Belongs to the universal ribosomal protein uL10 family. As to quaternary structure, part of the ribosomal stalk of the 50S ribosomal subunit. The N-terminus interacts with L11 and the large rRNA to form the base of the stalk. The C-terminus forms an elongated spine to which L12 dimers bind in a sequential fashion forming a multimeric L10(L12)X complex.

Functionally, forms part of the ribosomal stalk, playing a central role in the interaction of the ribosome with GTP-bound translation factors. The polypeptide is Large ribosomal subunit protein uL10 (rplJ) (Proteus vulgaris).